The chain runs to 382 residues: UDP-N-acetylglucosamine--N-acetylmuramyl-(pentapeptide) pyrophosphoryl-undecaprenol N-acetylglucosamine transferase (382 aa).

UDP-N-acetyl-alpha-D-glucosamine contacts are provided by residues threonine 17–glycine 19, asparagine 137, arginine 179, serine 213, and glutamine 308.

Belongs to the glycosyltransferase 28 family. MurG subfamily.

It localises to the cell membrane. It carries out the reaction di-trans,octa-cis-undecaprenyl diphospho-N-acetyl-alpha-D-muramoyl-L-alanyl-D-glutamyl-meso-2,6-diaminopimeloyl-D-alanyl-D-alanine + UDP-N-acetyl-alpha-D-glucosamine = di-trans,octa-cis-undecaprenyl diphospho-[N-acetyl-alpha-D-glucosaminyl-(1-&gt;4)]-N-acetyl-alpha-D-muramoyl-L-alanyl-D-glutamyl-meso-2,6-diaminopimeloyl-D-alanyl-D-alanine + UDP + H(+). The protein operates within cell wall biogenesis; peptidoglycan biosynthesis. In terms of biological role, cell wall formation. Catalyzes the transfer of a GlcNAc subunit on undecaprenyl-pyrophosphoryl-MurNAc-pentapeptide (lipid intermediate I) to form undecaprenyl-pyrophosphoryl-MurNAc-(pentapeptide)GlcNAc (lipid intermediate II). The chain is UDP-N-acetylglucosamine--N-acetylmuramyl-(pentapeptide) pyrophosphoryl-undecaprenol N-acetylglucosamine transferase from Rhodococcus jostii (strain RHA1).